We begin with the raw amino-acid sequence, 540 residues long: Chaperonin GroEL 2/3 (540 aa).

ATP contacts are provided by residues 30–33 (TLGP), Lys-51, 87–91 (DGTTT), Gly-415, 479–481 (NAA), and Asp-495.

It belongs to the chaperonin (HSP60) family. Forms a cylinder of 14 subunits composed of two heptameric rings stacked back-to-back. Interacts with the co-chaperonin GroES.

It localises to the cytoplasm. It carries out the reaction ATP + H2O + a folded polypeptide = ADP + phosphate + an unfolded polypeptide.. Functionally, together with its co-chaperonin GroES, plays an essential role in assisting protein folding. The GroEL-GroES system forms a nano-cage that allows encapsulation of the non-native substrate proteins and provides a physical environment optimized to promote and accelerate protein folding. This is Chaperonin GroEL 2/3 from Paraburkholderia xenovorans (strain LB400).